We begin with the raw amino-acid sequence, 390 residues long: Purine permease 21 (390 aa).

Residues 12-34 (QQGKEPIPTDQDERSSVSGSQTK) are disordered. Transmembrane regions (helical) follow at residues 44–64 (WLRV…ATIL), 78–98 (LATV…LLSV), 118–138 (LVYI…SIGL), 140–160 (YLPV…TAFF), 169–189 (LTPI…LLAF), 204–224 (YVKG…LLSL), 241–261 (VINM…VGLF), 287–307 (LVWT…LIFE), 312–332 (FSNA…VIIF), and 336–356 (MNGL…SYVY). The segment at 367 to 390 (KSNEIPTTESPDRPEAEGSSEQSK) is disordered.

The protein belongs to the purine permeases (TC 2.A.7.14) family. Expressed in mesophyll cells.

Its subcellular location is the membrane. In Arabidopsis thaliana (Mouse-ear cress), this protein is Purine permease 21.